The sequence spans 205 residues: Probable GTP-binding protein EngB (205 aa).

Positions 27-201 (TGIEIAFAGR…AAKLDFWFSP (175 aa)) constitute an EngB-type G domain. Residues 35-42 (GRSNAGKS), 62-66 (GRTQL), 80-83 (DLPG), 147-150 (TKAD), and 180-182 (FSA) each bind GTP. Mg(2+)-binding residues include serine 42 and threonine 64.

The protein belongs to the TRAFAC class TrmE-Era-EngA-EngB-Septin-like GTPase superfamily. EngB GTPase family. Mg(2+) serves as cofactor.

Necessary for normal cell division and for the maintenance of normal septation. The sequence is that of Probable GTP-binding protein EngB from Haemophilus influenzae (strain 86-028NP).